We begin with the raw amino-acid sequence, 515 residues long: ATP synthase subunit alpha (515 aa).

An ATP-binding site is contributed by 171–178; that stretch reads GDRQTGKT.

Belongs to the ATPase alpha/beta chains family. F-type ATPases have 2 components, CF(1) - the catalytic core - and CF(0) - the membrane proton channel. CF(1) has five subunits: alpha(3), beta(3), gamma(1), delta(1), epsilon(1). CF(0) has three main subunits: a(1), b(2) and c(9-12). The alpha and beta chains form an alternating ring which encloses part of the gamma chain. CF(1) is attached to CF(0) by a central stalk formed by the gamma and epsilon chains, while a peripheral stalk is formed by the delta and b chains.

The protein resides in the cell membrane. It carries out the reaction ATP + H2O + 4 H(+)(in) = ADP + phosphate + 5 H(+)(out). Its function is as follows. Produces ATP from ADP in the presence of a proton gradient across the membrane. The alpha chain is a regulatory subunit. In Stenotrophomonas maltophilia (strain K279a), this protein is ATP synthase subunit alpha.